The sequence spans 231 residues: Equistatin (231 aa).

The N-terminal stretch at 1–32 (MALSQNQAKFSKGFVVMIWVLFIACAITSTEA) is a signal peptide. Thyroglobulin type-1 domains are found at residues 34 to 95 (LTKC…SPDC), 102 to 163 (LTLC…RPTC), and 167 to 231 (LSEC…RPTC). 9 cysteine pairs are disulfide-bonded: Cys-37/Cys-56, Cys-67/Cys-74, Cys-76/Cys-95, Cys-105/Cys-124, Cys-135/Cys-142, Cys-144/Cys-163, Cys-170/Cys-191, Cys-202/Cys-209, and Cys-211/Cys-231.

It belongs to the protease inhibitor I31 family.

It is found in the secreted. Its function is as follows. Potent inhibitor of papain-like cysteine proteinases (Ki=0.18-0.57 nM on papain), as well as of the aspartic proteinase cathepsin D (Ki=0.3-05 nM). This chain is Equistatin, found in Actinia equina (Beadlet anemone).